We begin with the raw amino-acid sequence, 170 residues long: Adenine phosphoribosyltransferase (170 aa).

It belongs to the purine/pyrimidine phosphoribosyltransferase family. Homodimer.

Its subcellular location is the cytoplasm. The catalysed reaction is AMP + diphosphate = 5-phospho-alpha-D-ribose 1-diphosphate + adenine. The protein operates within purine metabolism; AMP biosynthesis via salvage pathway; AMP from adenine: step 1/1. Its function is as follows. Catalyzes a salvage reaction resulting in the formation of AMP, that is energically less costly than de novo synthesis. The sequence is that of Adenine phosphoribosyltransferase from Symbiobacterium thermophilum (strain DSM 24528 / JCM 14929 / IAM 14863 / T).